Consider the following 282-residue polypeptide: Acetylglutamate kinase (282 aa).

Substrate-binding positions include 62-63 (GG), R84, and N178.

This sequence belongs to the acetylglutamate kinase family. ArgB subfamily.

It is found in the cytoplasm. The enzyme catalyses N-acetyl-L-glutamate + ATP = N-acetyl-L-glutamyl 5-phosphate + ADP. It functions in the pathway amino-acid biosynthesis; L-arginine biosynthesis; N(2)-acetyl-L-ornithine from L-glutamate: step 2/4. In terms of biological role, catalyzes the ATP-dependent phosphorylation of N-acetyl-L-glutamate. In Kosmotoga olearia (strain ATCC BAA-1733 / DSM 21960 / TBF 19.5.1), this protein is Acetylglutamate kinase.